A 198-amino-acid polypeptide reads, in one-letter code: Probable GTP-binding protein EngB (198 aa).

Residues 22–195 form the EngB-type G domain; that stretch reads NRNEVAFVGR…IDKLFLEFAT (174 aa). GTP-binding positions include 30–37, 57–61, 75–78, 142–145, and 174–176; these read GRSNVGKS, GKTRL, DLPG, TKSD, and YSS. Mg(2+) is bound by residues Ser-37 and Thr-59.

It belongs to the TRAFAC class TrmE-Era-EngA-EngB-Septin-like GTPase superfamily. EngB GTPase family. The cofactor is Mg(2+).

Necessary for normal cell division and for the maintenance of normal septation. In Clostridium botulinum (strain Alaska E43 / Type E3), this protein is Probable GTP-binding protein EngB.